We begin with the raw amino-acid sequence, 298 residues long: Mimecan (298 aa).

The signal sequence occupies residues 1–20 (MKTLQSTLLLLLLVPLIKPA). Thr80 carries O-linked (GalNAc...) threonine glycosylation. A glycan (N-linked (GlcNAc...) (keratan sulfate) asparagine) is linked at Asn88. LRR repeat units lie at residues 112–131 (DAVP…FNKI), 132–155 (KKLT…GNLI), 156–179 (EDIE…ENQL), 180–199 (LKLP…YNKI), 200–225 (KSRG…HNAL), 226–246 (ESVP…FNNI), and 247–277 (ASIT…GNPI). Residue Asn214 is glycosylated (N-linked (GlcNAc...) (keratan sulfate) asparagine). Cys255 and Cys288 are joined by a disulfide. Asn258 carries N-linked (GlcNAc...) (keratan sulfate) asparagine glycosylation.

Belongs to the small leucine-rich proteoglycan (SLRP) family. SLRP class III subfamily. In terms of processing, O-glycosylated with a core 1 or possibly core 8 glycan. Post-translationally, contains keratan sulfate. Bone.

It is found in the secreted. Its subcellular location is the extracellular space. The protein localises to the extracellular matrix. In terms of biological role, induces bone formation in conjunction with TGF-beta-1 or TGF-beta-2. The sequence is that of Mimecan (OGN) from Homo sapiens (Human).